The sequence spans 141 residues: Lutropin subunit beta (141 aa).

A signal peptide spans 1-20 (MEMLQGLLLWLLLSMGGARA). Disulfide bonds link cysteine 29–cysteine 77, cysteine 43–cysteine 92, cysteine 46–cysteine 130, cysteine 54–cysteine 108, cysteine 58–cysteine 110, and cysteine 113–cysteine 120. N-linked (GlcNAc...) asparagine glycosylation is found at asparagine 33 and asparagine 50.

It belongs to the glycoprotein hormones subunit beta family. Heterodimer of a common alpha chain and a unique beta chain which confers biological specificity to thyrotropin, lutropin, follitropin and gonadotropin.

Its subcellular location is the secreted. In terms of biological role, promotes spermatogenesis and ovulation by stimulating the testes and ovaries to synthesize steroids. In Macaca fascicularis (Crab-eating macaque), this protein is Lutropin subunit beta (LHB).